A 650-amino-acid polypeptide reads, in one-letter code: Phosphatidylinositol-3,5-bisphosphate 3-phosphatase MTMR14 (650 aa).

The tract at residues 1–27 is disordered; it reads MAGARAAAAAASAGSSASSGNQPPQEL. Lysine 194 carries the N6-acetyllysine modification. A glycan (N-linked (GlcNAc...) asparagine) is linked at asparagine 226. Residue cysteine 330 is the Phosphocysteine intermediate of the active site. A 1,2-diacyl-sn-glycero-3-phospho-(1D-myo-inositol-3,5-bisphosphate) contacts are provided by glycine 333, tryptophan 334, aspartate 335, arginine 336, and arginine 382. Residues glycine 333, tryptophan 334, aspartate 335, arginine 336, and arginine 382 each coordinate a 1,2-diacyl-sn-glycero-3-phospho-(1D-myo-inositol-3-phosphate). Residues 476–546 are disordered; sequence AAWRKSHSSS…PRSVDHPLPG (71 aa). Serine 518 carries the post-translational modification Phosphoserine. Asparagine 519 carries N-linked (GlcNAc...) asparagine glycosylation. 3 positions are modified to phosphoserine: serine 530, serine 580, and serine 624. An Omega-N-methylarginine modification is found at arginine 638.

This sequence belongs to the protein-tyrosine phosphatase family. Non-receptor class myotubularin subfamily. Expressed in various tissues, including heart, skeletal muscle, placenta, liver, lung, kidney and pancreas.

The protein localises to the cytoplasm. The catalysed reaction is a 1,2-diacyl-sn-glycero-3-phospho-(1D-myo-inositol-3,5-bisphosphate) + H2O = a 1,2-diacyl-sn-glycero-3-phospho-(1D-myo-inositol-5-phosphate) + phosphate. It catalyses the reaction a 1,2-diacyl-sn-glycero-3-phospho-(1D-myo-inositol-3-phosphate) + H2O = a 1,2-diacyl-sn-glycero-3-phospho-(1D-myo-inositol) + phosphate. Functionally, lipid phosphatase that specifically dephosphorylates the D-3 position of phosphatidylinositol 3-phosphate and phosphatidylinositol 3,5-bisphosphate, generating phosphatidylinositol and phosphatidylinositol 5-phosphate. This chain is Phosphatidylinositol-3,5-bisphosphate 3-phosphatase MTMR14, found in Homo sapiens (Human).